A 1206-amino-acid chain; its full sequence is uncharacterized protein (1206 aa).

Disordered regions lie at residues 133–547 (YDLD…PVDY), 568–837 (FASS…DQLL), and 859–1206 (RQRA…KATS). 2 stretches are compositionally biased toward pro residues: residues 139-151 (IPPP…PGPP) and 159-234 (GESP…PPAP). At Ser-255 the chain carries Phosphoserine. The segment covering 305–319 (VRTSSIPVQEAPGAS) has biased composition (low complexity). Residues 351-363 (RALEPEQPREPRP) show a composition bias toward basic and acidic residues. Pro residues predominate over residues 384-413 (APPPAPPLPPPAPPLPPPAPSLPPAAPPLP). A compositionally biased stretch (low complexity) spans 414–436 (STELAAPPSSGFMKTSKSNSPAL). The segment covering 454 to 467 (VDWRDPRQMEKLRS) has biased composition (basic and acidic residues). The segment covering 522–531 (PEKSPSSSSL) has biased composition (low complexity). The span at 568–577 (FASSAEKEAK) shows a compositional bias: basic and acidic residues. Over residues 656 to 671 (LPKATPGLTLPLKPTP) the composition is skewed to low complexity. A Phosphothreonine modification is found at Thr-680. The span at 732–747 (AEKDLASVRQREKPET) shows a compositional bias: basic and acidic residues. Positions 1001–1016 (IPPPPEFSNDPEPPAP) are enriched in pro residues. The span at 1028 to 1041 (PRNNFSDLGQSWGP) shows a compositional bias: polar residues. Residues Arg-1051, Arg-1083, and Arg-1094 each carry the omega-N-methylarginine modification. Positions 1170–1184 (PHGNTHYGSPINTFT) are enriched in polar residues.

This is an uncharacterized protein from Mus musculus (Mouse).